The chain runs to 718 residues: Catalase-peroxidase (718 aa).

The segment at residues 98-219 (WHAAGTYRMG…LAATEMGLIY (122 aa)) is a cross-link (tryptophyl-tyrosyl-methioninium (Trp-Tyr) (with M-245)). His-99 functions as the Proton acceptor in the catalytic mechanism. Residues 219-245 (YVNPEGPQASGDPRSAAPFIRATFGNM) constitute a cross-link (tryptophyl-tyrosyl-methioninium (Tyr-Met) (with W-98)). Heme b is bound at residue His-260.

This sequence belongs to the peroxidase family. Peroxidase/catalase subfamily. Homodimer or homotetramer. It depends on heme b as a cofactor. In terms of processing, formation of the three residue Trp-Tyr-Met cross-link is important for the catalase, but not the peroxidase activity of the enzyme.

It carries out the reaction H2O2 + AH2 = A + 2 H2O. The catalysed reaction is 2 H2O2 = O2 + 2 H2O. Bifunctional enzyme with both catalase and broad-spectrum peroxidase activity. The sequence is that of Catalase-peroxidase from Acinetobacter baumannii (strain ACICU).